A 187-amino-acid polypeptide reads, in one-letter code: Elongation factor P (187 aa).

This sequence belongs to the elongation factor P family.

It localises to the cytoplasm. The protein operates within protein biosynthesis; polypeptide chain elongation. Functionally, involved in peptide bond synthesis. Stimulates efficient translation and peptide-bond synthesis on native or reconstituted 70S ribosomes in vitro. Probably functions indirectly by altering the affinity of the ribosome for aminoacyl-tRNA, thus increasing their reactivity as acceptors for peptidyl transferase. This is Elongation factor P from Wolinella succinogenes (strain ATCC 29543 / DSM 1740 / CCUG 13145 / JCM 31913 / LMG 7466 / NCTC 11488 / FDC 602W) (Vibrio succinogenes).